Reading from the N-terminus, the 161-residue chain is UPF0262 protein Meso_0189 (161 aa).

Belongs to the UPF0262 family.

The polypeptide is UPF0262 protein Meso_0189 (Chelativorans sp. (strain BNC1)).